The chain runs to 426 residues: 3-isopropylmalate dehydratase large subunit (426 aa).

Cys-307, Cys-367, and Cys-370 together coordinate [4Fe-4S] cluster.

The protein belongs to the aconitase/IPM isomerase family. LeuC type 2 subfamily. As to quaternary structure, heterodimer of LeuC and LeuD. [4Fe-4S] cluster serves as cofactor.

The catalysed reaction is (2R,3S)-3-isopropylmalate = (2S)-2-isopropylmalate. Its pathway is amino-acid biosynthesis; L-leucine biosynthesis; L-leucine from 3-methyl-2-oxobutanoate: step 2/4. Functionally, catalyzes the isomerization between 2-isopropylmalate and 3-isopropylmalate, via the formation of 2-isopropylmaleate. The protein is 3-isopropylmalate dehydratase large subunit of Sulfurovum sp. (strain NBC37-1).